Here is a 494-residue protein sequence, read N- to C-terminus: Probable cytochrome P450 313a4 (494 aa).

Position 440 (Cys440) interacts with heme.

Belongs to the cytochrome P450 family. It depends on heme as a cofactor.

Its subcellular location is the endoplasmic reticulum membrane. It is found in the microsome membrane. Its function is as follows. May be involved in the metabolism of insect hormones and in the breakdown of synthetic insecticides. In Drosophila melanogaster (Fruit fly), this protein is Probable cytochrome P450 313a4 (Cyp313a4).